We begin with the raw amino-acid sequence, 124 residues long: Nucleoid-associated protein Noca_0318 (124 aa).

The protein belongs to the YbaB/EbfC family. In terms of assembly, homodimer.

Its subcellular location is the cytoplasm. It localises to the nucleoid. Functionally, binds to DNA and alters its conformation. May be involved in regulation of gene expression, nucleoid organization and DNA protection. This is Nucleoid-associated protein Noca_0318 from Nocardioides sp. (strain ATCC BAA-499 / JS614).